We begin with the raw amino-acid sequence, 116 residues long: Putative iron-sulfur cluster insertion protein ErpA (116 aa).

Residues C44, C108, and C110 each contribute to the iron-sulfur cluster site.

This sequence belongs to the HesB/IscA family. In terms of assembly, homodimer. It depends on iron-sulfur cluster as a cofactor.

Functionally, required for insertion of 4Fe-4S clusters. The polypeptide is Putative iron-sulfur cluster insertion protein ErpA (Thiobacillus denitrificans (strain ATCC 25259 / T1)).